Here is an 884-residue protein sequence, read N- to C-terminus: Protein P (884 aa).

The segment at 1–184 is terminal protein domain (TP); the sequence is MHPFSRLFRN…GKPYSWEHRQ (184 aa). The segment at 185 to 387 is spacer; that stretch reads LVQHNGQQHK…YCIHHIVSSL (203 aa). Positions 299-345 are disordered; the sequence is RNSGHTTWFSSASNSNKSRSREKAYSSNSTSKRYSPPLNYEKSDFSS. A polymerase/reverse transcriptase domain (RT) region spans residues 388-729; that stretch reads DDWGPCTVTG…YEELWPVVRQ (342 aa). The Reverse transcriptase domain occupies 398-639; that stretch reads DVTIKSPRTP…NHLHFMGYVI (242 aa). The Mg(2+) site is built by aspartate 470, aspartate 590, and aspartate 591.

It belongs to the hepadnaviridae P protein family.

It catalyses the reaction DNA(n) + a 2'-deoxyribonucleoside 5'-triphosphate = DNA(n+1) + diphosphate. The catalysed reaction is Endonucleolytic cleavage to 5'-phosphomonoester.. With respect to regulation, activated by host HSP70 and HSP40 in vitro to be able to bind the epsilon loop of the pgRNA. Because deletion of the RNase H region renders the protein partly chaperone-independent, the chaperones may be needed indirectly to relieve occlusion of the RNA-binding site by this domain. Inhibited by several reverse-transcriptase inhibitors: Lamivudine, Adefovir and Entecavir. In terms of biological role, multifunctional enzyme that converts the viral RNA genome into dsDNA in viral cytoplasmic capsids. This enzyme displays a DNA polymerase activity that can copy either DNA or RNA templates, and a ribonuclease H (RNase H) activity that cleaves the RNA strand of RNA-DNA heteroduplexes in a partially processive 3'- to 5'-endonucleasic mode. Neo-synthesized pregenomic RNA (pgRNA) are encapsidated together with the P protein, and reverse-transcribed inside the nucleocapsid. Initiation of reverse-transcription occurs first by binding the epsilon loop on the pgRNA genome, and is initiated by protein priming, thereby the 5'-end of (-)DNA is covalently linked to P protein. Partial (+)DNA is synthesized from the (-)DNA template and generates the relaxed circular DNA (RC-DNA) genome. After budding and infection, the RC-DNA migrates in the nucleus, and is converted into a plasmid-like covalently closed circular DNA (cccDNA). The activity of P protein does not seem to be necessary for cccDNA generation, and is presumably released from (+)DNA by host nuclear DNA repair machinery. The chain is Protein P from Woodchuck hepatitis B virus (isolate 7) (WHV).